The primary structure comprises 712 residues: Frizzled-6 (712 aa).

Residues Met-1–Gly-18 form the signal peptide. An FZ domain is found at His-19–Thr-132. Topologically, residues His-19–Phe-201 are extracellular. 5 cysteine pairs are disulfide-bonded: Cys-24–Cys-85, Cys-32–Cys-78, Cys-69–Cys-106, Cys-95–Cys-129, and Cys-99–Cys-123. A glycan (N-linked (GlcNAc...) asparagine) is linked at Asn-38. A helical transmembrane segment spans residues Ile-202–Ile-222. The Cytoplasmic portion of the chain corresponds to Asp-223–Pro-233. A helical membrane pass occupies residues Ile-234 to Leu-254. At Gly-255–Val-284 the chain is on the extracellular side. Residues Leu-285 to Ile-305 traverse the membrane as a helical segment. The Cytoplasmic segment spans residues Thr-306–Ala-324. Residues Val-325–Met-345 form a helical membrane-spanning segment. Residues Asn-346–Phe-370 lie on the Extracellular side of the membrane. N-linked (GlcNAc...) asparagine glycosylation occurs at Asn-352. Residues Val-371 to Ile-391 form a helical membrane-spanning segment. Topologically, residues Ser-392 to Arg-416 are cytoplasmic. Residues Ile-417 to Tyr-437 form a helical membrane-spanning segment. Topologically, residues Glu-438–Leu-473 are extracellular. The chain crosses the membrane as a helical span at residues Ala-474 to Val-494. The Cytoplasmic portion of the chain corresponds to Gly-495 to Thr-712. Residues Lys-498–Trp-503 carry the Lys-Thr-X-X-X-Trp motif, mediates interaction with the PDZ domain of Dvl family members motif. The interval Glu-588–Thr-712 is disordered. Composition is skewed to basic and acidic residues over residues Leu-628–Gly-637 and Thr-652–Val-664. The segment covering Gly-668 to Leu-693 has biased composition (polar residues). Positions Gly-700–Thr-712 are enriched in basic and acidic residues.

It belongs to the G-protein coupled receptor Fz/Smo family. As to quaternary structure, interacts with LMBR1L. In terms of processing, ubiquitinated by ZNRF3, leading to its degradation by the proteasome.

The protein localises to the membrane. The protein resides in the cell membrane. Its subcellular location is the cell surface. It localises to the apical cell membrane. It is found in the cytoplasmic vesicle membrane. The protein localises to the endoplasmic reticulum membrane. Functionally, receptor for Wnt proteins. Most of frizzled receptors are coupled to the beta-catenin canonical signaling pathway, which leads to the activation of disheveled proteins, inhibition of GSK-3 kinase, nuclear accumulation of beta-catenin and activation of Wnt target genes. A second signaling pathway involving PKC and calcium fluxes has been seen for some family members, but it is not yet clear if it represents a distinct pathway or if it can be integrated in the canonical pathway, as PKC seems to be required for Wnt-mediated inactivation of GSK-3 kinase. Both pathways seem to involve interactions with G-proteins. Activation by Wnt5A stimulates PKC activity via a G-protein-dependent mechanism. Involved in transduction and intercellular transmission of polarity information during tissue morphogenesis and/or in differentiated tissues. Together with FZD3, is involved in the neural tube closure and plays a role in the regulation of the establishment of planar cell polarity (PCP), particularly in the orientation of asymmetric bundles of stereocilia on the apical faces of a subset of auditory and vestibular sensory cells located in the inner ear. In Canis lupus familiaris (Dog), this protein is Frizzled-6 (FZD6).